A 596-amino-acid chain; its full sequence is Aspartic proteinase MKC7 (596 aa).

The signal sequence occupies residues 1–22; the sequence is MKLSVLTFVVDALLVCSSIVDA. The propeptide occupies 23-65; that stretch reads GVTDFPSLPSNEVYVKMNFQKKYGSSFENALDDTKGRTRLMTR. Residues 81 to 468 enclose the Peptidase A1 domain; the sequence is YSVELDIGTP…DLDNMEISMA (388 aa). Aspartate 99 is an active-site residue. N-linked (GlcNAc...) asparagine glycans are attached at residues asparagine 180, asparagine 190, asparagine 219, asparagine 229, asparagine 232, asparagine 286, and asparagine 346. Residue aspartate 360 is part of the active site. 2 N-linked (GlcNAc...) asparagine glycosylation sites follow: asparagine 471 and asparagine 517. Residues 530 to 570 are compositionally biased toward low complexity; that stretch reads ATSSSSSKGQKTQTSTTALSISKSTSSTSSTGMLSPTSSSS. The disordered stretch occupies residues 530–578; that stretch reads ATSSSSSKGQKTQTSTTALSISKSTSSTSSTGMLSPTSSSSTRKENGGH. Asparagine 575 carries GPI-anchor amidated asparagine lipidation. Positions 576-596 are cleaved as a propeptide — removed in mature form; the sequence is GGHNLNPPFFARFITAIFHHI.

This sequence belongs to the peptidase A1 family.

The protein resides in the cell membrane. The enzyme catalyses Hydrolyzes various precursor proteins with Arg or Lys in P1, and commonly Arg or Lys also in P2. The P3 amino acid is usually non-polar, but otherwise additional basic amino acids are favorable in both non-prime and prime positions.. In terms of biological role, cleaves proteins C-terminally to the most C-terminal basic residue. Can process the alpha-mating factor precursor. Required for cell wall integrity. In Saccharomyces cerevisiae (strain ATCC 204508 / S288c) (Baker's yeast), this protein is Aspartic proteinase MKC7 (MKC7).